Here is a 38-residue protein sequence, read N- to C-terminus: Large ribosomal subunit protein bL36 (38 aa).

It belongs to the bacterial ribosomal protein bL36 family.

The sequence is that of Large ribosomal subunit protein bL36 from Lactobacillus acidophilus (strain ATCC 700396 / NCK56 / N2 / NCFM).